The primary structure comprises 120 residues: Large ribosomal subunit protein bL20 (120 aa).

The protein belongs to the bacterial ribosomal protein bL20 family.

Binds directly to 23S ribosomal RNA and is necessary for the in vitro assembly process of the 50S ribosomal subunit. It is not involved in the protein synthesizing functions of that subunit. The sequence is that of Large ribosomal subunit protein bL20 from Paracidovorax citrulli (strain AAC00-1) (Acidovorax citrulli).